A 267-amino-acid polypeptide reads, in one-letter code: Tetrahydromethanopterin S-methyltransferase subunit C (267 aa).

Helical transmembrane passes span 18-38 (LMALGILGGLAGIYASAVNPV), 39-59 (IGPVLASLGAVCAIVWGADAI), 76-96 (YMSVSIGIVGVVAGLASVFVV), 99-119 (IAVPVVALILAMILGVVVAVL), 138-158 (ISGAAALSVLGFSAAIAGSYT), 163-183 (LTSVITTGFIGLLFILNTMAI), 209-229 (FISMAIVGLLGIGLNPSWWLV), and 230-250 (SLIGALCWIVAFRAFVSASFE).

Belongs to the MtrC family. The complex is composed of 8 subunits; MtrA, MtrB, MtrC, MtrD, MtrE, MtrF, MtrG and MtrH.

The protein resides in the cell membrane. It catalyses the reaction 5-methyl-5,6,7,8-tetrahydromethanopterin + coenzyme M + 2 Na(+)(in) = 5,6,7,8-tetrahydromethanopterin + methyl-coenzyme M + 2 Na(+)(out). It participates in one-carbon metabolism; methanogenesis from CO(2); methyl-coenzyme M from 5,10-methylene-5,6,7,8-tetrahydromethanopterin: step 2/2. In terms of biological role, part of a complex that catalyzes the formation of methyl-coenzyme M and tetrahydromethanopterin from coenzyme M and methyl-tetrahydromethanopterin. This is an energy-conserving, sodium-ion translocating step. In Methanothermobacter marburgensis (strain ATCC BAA-927 / DSM 2133 / JCM 14651 / NBRC 100331 / OCM 82 / Marburg) (Methanobacterium thermoautotrophicum), this protein is Tetrahydromethanopterin S-methyltransferase subunit C.